The primary structure comprises 105 residues: Hydrogen cyanide synthase subunit HcnA (105 aa).

One can recognise a 2Fe-2S ferredoxin-type domain in the interval 16–97; that stretch reads ADMTISLNGQ…GMQVQTLSNR (82 aa). Residues Cys-60, Cys-65, Cys-68, and Cys-81 each coordinate [2Fe-2S] cluster.

As to quaternary structure, heterotrimer of HcnA, HcnB and HcnC.

The protein localises to the cell membrane. It catalyses the reaction glycine + 2 A = hydrogen cyanide + 2 AH2 + CO2. In terms of biological role, a three-component membrane-bound flavoenzyme that catalyzes the formation of hydrogen cyanide, a secondary metabolite, by transfer of electrons to a cyanide-resistant branch of the aerobic respiratory chain. Contributes to suppression of black root rot of tobacco. The chain is Hydrogen cyanide synthase subunit HcnA from Pseudomonas protegens (strain DSM 19095 / LMG 27888 / CFBP 6595 / CHA0).